The chain runs to 114 residues: uncharacterized protein (114 aa).

The HTH arsR-type domain maps to E2–L97. Residues G37–R60 constitute a DNA-binding region (H-T-H motif).

This is an uncharacterized protein from Mycobacterium tuberculosis (strain CDC 1551 / Oshkosh).